The following is a 188-amino-acid chain: MGGTFDPIHHGHLVAASEVADRFGLDEVIFVPTGQPWQKADEPVSPAEDRYLMTVIATASNPRFQVSRVDIDRSGPTYTIDTLRDLRAVCGAKVQLFFITGADALEKILSWKDLDEAFELAHFIGVTRPGFRLSDAHLPADTVSLVQVPAMAISSTDCRARVSRSAPLWYLVPDGVVQYIAKRRLYQQ.

This sequence belongs to the NadD family.

The catalysed reaction is nicotinate beta-D-ribonucleotide + ATP + H(+) = deamido-NAD(+) + diphosphate. Its pathway is cofactor biosynthesis; NAD(+) biosynthesis; deamido-NAD(+) from nicotinate D-ribonucleotide: step 1/1. Catalyzes the reversible adenylation of nicotinate mononucleotide (NaMN) to nicotinic acid adenine dinucleotide (NaAD). In Salinispora tropica (strain ATCC BAA-916 / DSM 44818 / JCM 13857 / NBRC 105044 / CNB-440), this protein is Probable nicotinate-nucleotide adenylyltransferase.